Consider the following 33-residue polypeptide: Brevinin-2DYb (33 aa).

A disulfide bridge connects residues C27 and C33.

In terms of tissue distribution, expressed by the skin glands.

Its subcellular location is the secreted. In terms of biological role, antimicrobial peptide. Active against the Gram-positive bacterium S.aureus (MIC=30 uM) and the Gram-negative bacterium E.coli (MIC=30 uM). This chain is Brevinin-2DYb, found in Rana dybowskii (Dybovsky's frog).